The primary structure comprises 186 residues: NAVKYDQQLWPNGEIIYEISPGLRQYEQLILEAMRSYEDTTCIKFRRRFDEDDYVNIHVGDKCYSRVGKSFKGGPQPLSLGNGCTDFGTILHELGHSVGFDHEHSRTDRDEYLIIHERNIKNGSEHNFEKLLESKTRTIGPFDYDSIMLYGSYAFSRDTEAVENHGTRRTRTPYEICHSKRKAELL.

Residues 1 to 186 (NAVKYDQQLW…CHSKRKAELL (186 aa)) enclose the Peptidase M12A domain. Intrachain disulfides connect C42–C177 and C63–C84. H92 serves as a coordination point for Zn(2+). Residue E93 is part of the active site. 2 residues coordinate Zn(2+): H96 and H102. N122 carries an N-linked (GlcNAc...) asparagine glycan.

Monomer. Zn(2+) is required as a cofactor. As to expression, expressed by the venom gland.

Its subcellular location is the secreted. With respect to regulation, inhibited by 1,10-phenanthroline. Zinc metalloprotease. Provoques deadhesion of endothelial cells from cell cultures, and also degradation of fibronectin, fibrinogen and gelatin in vitro. Its role in the venom is not fully understood but it might act as a spreading factor that facilitates diffusion of other venom toxins. Alternatively, it might be involved in the proteolytic processing of other venom toxins or it might play a role in extra-oral digestion of prey. In Loxosceles gaucho (Spider), this protein is Astacin-like metalloprotease toxin 5.